Reading from the N-terminus, the 730-residue chain is MTENKCPVTGKMGKATAGSGTTNKDWWPNQLNLNILHQNSQLSNPMSKDFNYAEEFKKLDFQALKVDLYMLMTDSQIWWPADYGNYGPLFIRMAWHSAGTYRVGDGRGGGSLGLQRFAPLNSWPDNINLDKARRLLWPIKKKYGNKISWADLLILTGNCALESMGLKTLGFGGGRVDVWEPQEDIYWGSEKEWLGDEREKGDKELENPLAAVQMGLIYVNPEGPNGNPDPLGSAHDVRETFARMAMNDEETVALIAGGHTFGKCHGAASPSYVGPAPEAAPIEEQGLGWKNTYGSGNGDDTIGSGLEGAWKANPTKWTMGYLKTLFKYDWELVKSPAGAYQWLAKNVDEEDMVIDAEDSTKKHRPMMTTADLGLRYDPIYEPIARNYLKNPEKFAHDFASAWFKLTHRDMGPISRYLGPEVPKESFIWQDPIPLVKHKLITKKDITHIKKKILDSGLSISDLVATAWASASTFRGSDKRGGANGGRIRLEPQKNWEVNEPKKLNNVLNTLKQIKENFNSSHSKDKKVSLADIIILGGCVGIEQAAKRAGYNINVPFIPGRTDAIQEQTDVKSFAVLEPKEDGFRNYLKTKYVVKPEDMLIDRAQLLTLTAPEMTVLIGGMRVLNCNYNKSKDGVFTNRPECLTNDFFVNLLDMNTVWKPKSEDKDRFEGFDRETGELKWTATRVDLIFGSNSQLRAIAEVYACDDNKEKFIQDFIFAWNKIMNADRFEIK.

Positions W95–Y218 form a cross-link, tryptophyl-tyrosyl-methioninium (Trp-Tyr) (with M-244). The active-site Proton acceptor is the H96. Residues Y218–M244 constitute a cross-link (tryptophyl-tyrosyl-methioninium (Tyr-Met) (with W-95)). H259 contributes to the heme b binding site.

The protein belongs to the peroxidase family. Peroxidase/catalase subfamily. Homodimer or homotetramer. Heme b is required as a cofactor. In terms of processing, formation of the three residue Trp-Tyr-Met cross-link is important for the catalase, but not the peroxidase activity of the enzyme.

The enzyme catalyses H2O2 + AH2 = A + 2 H2O. It carries out the reaction 2 H2O2 = O2 + 2 H2O. Functionally, bifunctional enzyme with both catalase and broad-spectrum peroxidase activity. The chain is Catalase-peroxidase from Clostridium botulinum (strain Eklund 17B / Type B).